Here is a 240-residue protein sequence, read N- to C-terminus: Probable transcriptional regulatory protein Nmul_A2722 (240 aa).

Belongs to the TACO1 family.

The protein resides in the cytoplasm. This Nitrosospira multiformis (strain ATCC 25196 / NCIMB 11849 / C 71) protein is Probable transcriptional regulatory protein Nmul_A2722.